The chain runs to 183 residues: ATP-dependent protease subunit HslV (183 aa).

Residue Thr2 is part of the active site. Na(+) is bound by residues Gly157, Cys160, and Thr163.

It belongs to the peptidase T1B family. HslV subfamily. A double ring-shaped homohexamer of HslV is capped on each side by a ring-shaped HslU homohexamer. The assembly of the HslU/HslV complex is dependent on binding of ATP.

The protein localises to the cytoplasm. The catalysed reaction is ATP-dependent cleavage of peptide bonds with broad specificity.. Allosterically activated by HslU binding. Protease subunit of a proteasome-like degradation complex believed to be a general protein degrading machinery. This is ATP-dependent protease subunit HslV from Vibrio parahaemolyticus serotype O3:K6 (strain RIMD 2210633).